The primary structure comprises 406 residues: Argininosuccinate synthase (406 aa).

Residues alanine 10 to serine 18 and alanine 37 contribute to the ATP site. Residues tyrosine 88 and serine 93 each contribute to the L-citrulline site. Glycine 118 contacts ATP. Residues threonine 120, asparagine 124, and aspartate 125 each contribute to the L-aspartate site. Position 124 (asparagine 124) interacts with L-citrulline. Positions 128, 179, 188, 264, and 276 each coordinate L-citrulline.

This sequence belongs to the argininosuccinate synthase family. Type 1 subfamily. In terms of assembly, homotetramer.

It localises to the cytoplasm. The catalysed reaction is L-citrulline + L-aspartate + ATP = 2-(N(omega)-L-arginino)succinate + AMP + diphosphate + H(+). It functions in the pathway amino-acid biosynthesis; L-arginine biosynthesis; L-arginine from L-ornithine and carbamoyl phosphate: step 2/3. The polypeptide is Argininosuccinate synthase (Azotobacter vinelandii (strain DJ / ATCC BAA-1303)).